The primary structure comprises 633 residues: Probable potassium transport system protein Kup 3 (633 aa).

A run of 12 helical transmembrane segments spans residues 24–44 (LVLA…LYAF), 61–81 (VLGI…LKYV), 114–134 (LVLG…TPAI), 148–168 (PALS…LFFV), 180–200 (FGPV…IHIF), 222–242 (IGSA…AEAL), 258–278 (WFSL…AFVL), 298–318 (IPMV…VISG), 348–368 (IFMP…VLFF), 377–397 (AYGI…FIVM), 405–425 (LTAA…FLAA), and 427–447 (IAKF…MALI).

This sequence belongs to the HAK/KUP transporter (TC 2.A.72) family.

It is found in the cell inner membrane. It catalyses the reaction K(+)(in) + H(+)(in) = K(+)(out) + H(+)(out). Functionally, transport of potassium into the cell. Likely operates as a K(+):H(+) symporter. The chain is Probable potassium transport system protein Kup 3 from Rhizobium johnstonii (strain DSM 114642 / LMG 32736 / 3841) (Rhizobium leguminosarum bv. viciae).